Here is a 146-residue protein sequence, read N- to C-terminus: Large ribosomal subunit protein uL15 (146 aa).

Residues Met-1–Arg-18 show a composition bias toward basic and acidic residues. The segment at Met-1–Leu-57 is disordered. 2 stretches are compositionally biased toward gly residues: residues Arg-21–Ser-31 and Ser-42–Gly-52.

It belongs to the universal ribosomal protein uL15 family. As to quaternary structure, part of the 50S ribosomal subunit.

Functionally, binds to the 23S rRNA. This chain is Large ribosomal subunit protein uL15, found in Bacillus pumilus (strain SAFR-032).